A 523-amino-acid chain; its full sequence is Cytochrome P450 52A3-B (523 aa).

The helical transmembrane segment at 17 to 34 threads the bilayer; the sequence is WYTILFGAAFTYFLSIAL. C471 provides a ligand contact to heme.

The protein belongs to the cytochrome P450 family. It depends on heme as a cofactor.

It localises to the membrane. Together with an NADPH cytochrome P450 the enzyme system catalyzes the terminal hydroxylation as the first step in the assimilation of alkanes and fatty acids. In Candida maltosa (Yeast), this protein is Cytochrome P450 52A3-B (CYP52A3-B).